Reading from the N-terminus, the 84-residue chain is Small ribosomal subunit protein uS17 (84 aa).

Belongs to the universal ribosomal protein uS17 family. As to quaternary structure, part of the 30S ribosomal subunit.

Functionally, one of the primary rRNA binding proteins, it binds specifically to the 5'-end of 16S ribosomal RNA. This is Small ribosomal subunit protein uS17 from Shigella boydii serotype 18 (strain CDC 3083-94 / BS512).